The following is a 466-amino-acid chain: Bifunctional protein GlmU (466 aa).

A pyrophosphorylase region spans residues M1–R233. Residues L11–G14, K25, Q79, and G84–T85 each bind UDP-N-acetyl-alpha-D-glucosamine. D108 is a binding site for Mg(2+). The UDP-N-acetyl-alpha-D-glucosamine site is built by G143, E158, N173, and N231. N231 serves as a coordination point for Mg(2+). Residues A234–Q254 form a linker region. Residues G255–A466 form an N-acetyltransferase region. R337 and K355 together coordinate UDP-N-acetyl-alpha-D-glucosamine. Residue H367 is the Proton acceptor of the active site. Positions 370 and 381 each coordinate UDP-N-acetyl-alpha-D-glucosamine. Acetyl-CoA-binding positions include A384, N390–Y391, S409, A427, and R444.

In the N-terminal section; belongs to the N-acetylglucosamine-1-phosphate uridyltransferase family. The protein in the C-terminal section; belongs to the transferase hexapeptide repeat family. As to quaternary structure, homotrimer. Mg(2+) serves as cofactor.

Its subcellular location is the cytoplasm. The enzyme catalyses alpha-D-glucosamine 1-phosphate + acetyl-CoA = N-acetyl-alpha-D-glucosamine 1-phosphate + CoA + H(+). It carries out the reaction N-acetyl-alpha-D-glucosamine 1-phosphate + UTP + H(+) = UDP-N-acetyl-alpha-D-glucosamine + diphosphate. Its pathway is nucleotide-sugar biosynthesis; UDP-N-acetyl-alpha-D-glucosamine biosynthesis; N-acetyl-alpha-D-glucosamine 1-phosphate from alpha-D-glucosamine 6-phosphate (route II): step 2/2. It participates in nucleotide-sugar biosynthesis; UDP-N-acetyl-alpha-D-glucosamine biosynthesis; UDP-N-acetyl-alpha-D-glucosamine from N-acetyl-alpha-D-glucosamine 1-phosphate: step 1/1. It functions in the pathway bacterial outer membrane biogenesis; LPS lipid A biosynthesis. Catalyzes the last two sequential reactions in the de novo biosynthetic pathway for UDP-N-acetylglucosamine (UDP-GlcNAc). The C-terminal domain catalyzes the transfer of acetyl group from acetyl coenzyme A to glucosamine-1-phosphate (GlcN-1-P) to produce N-acetylglucosamine-1-phosphate (GlcNAc-1-P), which is converted into UDP-GlcNAc by the transfer of uridine 5-monophosphate (from uridine 5-triphosphate), a reaction catalyzed by the N-terminal domain. This chain is Bifunctional protein GlmU, found in Dichelobacter nodosus (strain VCS1703A).